Consider the following 421-residue polypeptide: Serine--tRNA ligase (421 aa).

L-serine is bound at residue 230-232 (TAE). Position 259–261 (259–261 (RRE)) interacts with ATP. Glu282 is a binding site for L-serine. Position 346-349 (346-349 (EISS)) interacts with ATP. Ser381 is a binding site for L-serine.

This sequence belongs to the class-II aminoacyl-tRNA synthetase family. Type-1 seryl-tRNA synthetase subfamily. As to quaternary structure, homodimer. The tRNA molecule binds across the dimer.

The protein localises to the cytoplasm. It carries out the reaction tRNA(Ser) + L-serine + ATP = L-seryl-tRNA(Ser) + AMP + diphosphate + H(+). It catalyses the reaction tRNA(Sec) + L-serine + ATP = L-seryl-tRNA(Sec) + AMP + diphosphate + H(+). It functions in the pathway aminoacyl-tRNA biosynthesis; selenocysteinyl-tRNA(Sec) biosynthesis; L-seryl-tRNA(Sec) from L-serine and tRNA(Sec): step 1/1. In terms of biological role, catalyzes the attachment of serine to tRNA(Ser). Is also able to aminoacylate tRNA(Sec) with serine, to form the misacylated tRNA L-seryl-tRNA(Sec), which will be further converted into selenocysteinyl-tRNA(Sec). The polypeptide is Serine--tRNA ligase (Acidithiobacillus ferrooxidans (strain ATCC 23270 / DSM 14882 / CIP 104768 / NCIMB 8455) (Ferrobacillus ferrooxidans (strain ATCC 23270))).